A 400-amino-acid chain; its full sequence is Large envelope protein (400 aa).

Methionine 1 carries the post-translational modification N-acetylmethionine. Disordered regions lie at residues 1-24 and 86-114; these read MGGW…PLGF and TTVP…PLRD. Glycine 2 carries the N-myristoyl glycine; by host lipid modification. A pre-S1 region spans residues 2-119; the sequence is GGWSSKPRKG…PPLRDTHPQA (118 aa). The segment at 2 to 174 is pre-S; that stretch reads GGWSSKPRKG…SSKTGDPVPN (173 aa). At 2–181 the chain is on the virion surface; in external conformation side; that stretch reads GGWSSKPRKG…VPNMENIASG (180 aa). At 2 to 253 the chain is on the intravirion; in internal conformation side; it reads GGWSSKPRKG…PGYRWMCLRR (252 aa). Residue tryptophan 4 is glycosylated (N-linked (GlcNAc...) asparagine). The segment covering 96–106 has biased composition (polar residues); the sequence is STNRQSGRQPT. The segment at 120–174 is pre-S2; sequence MQWNSTTFLQTLQDSRVRALYLPAGGSSSGTVSPAQNTVSAISSISSKTGDPVPN. A helical membrane pass occupies residues 182–202; that stretch reads LLGHLLVLQAGFFSLTKILTI. The Intravirion; in external conformation segment spans residues 203–253; it reads PQSLDSWWTSLNFLGGTPACPGQNSQSQISSHSPTCCPPICPGYRWMCLRR. Residues 254 to 274 traverse the membrane as a helical segment; that stretch reads FIIFLCILLLCLIFLLVLLDY. Residues 275–348 are Virion surface-facing; that stretch reads QGMLPVCPLT…WASVRFSWLS (74 aa). The N-linked (GlcNAc...) asparagine; by host glycan is linked to asparagine 320. A helical membrane pass occupies residues 349–369; sequence LLVPFVQWFVGLSPTVWLSVI. The Intravirion segment spans residues 370-375; that stretch reads WMMWFW. A helical transmembrane segment spans residues 376-398; sequence GPSLYNILRPFMPLLPTFFCLWV. Residues 399 to 400 lie on the Virion surface side of the membrane; it reads YI.

Belongs to the orthohepadnavirus major surface antigen family. Interacts (via its myristoylated pre-S1 region) with the host SLC10A1/NTCP; this interaction is essential for viral entry. In terms of assembly, in its internal form (Li-HBsAg), interacts with the capsid protein and with the isoform S. Interacts with host chaperone CANX. As to quaternary structure, associates with host chaperone CANX through its pre-S2 N glycan; this association may be essential for isoform M proper secretion. Interacts with isoform L. Interacts with the antigens of satellite virus HDV (HDVAgs); this interaction is required for encapsidation of HDV genomic RNA. In terms of processing, isoform M is N-terminally acetylated by host at a ratio of 90%, and N-glycosylated by host at the pre-S2 region. Myristoylated; this modification is essential for its interaction with the host protein SLC10A1/NTCP.

Its subcellular location is the virion membrane. The large envelope protein exists in two topological conformations, one which is termed 'external' or Le-HBsAg and the other 'internal' or Li-HBsAg. In its external conformation the protein attaches the virus to cell receptors and thereby initiating infection. This interaction determines the species specificity and liver tropism. This attachment induces virion internalization predominantly through caveolin-mediated endocytosis. The large envelope protein also assures fusion between virion membrane and endosomal membrane. In its internal conformation the protein plays a role in virion morphogenesis and mediates the contact with the nucleocapsid like a matrix protein. In terms of biological role, the middle envelope protein plays an important role in the budding of the virion. It is involved in the induction of budding in a nucleocapsid independent way. In this process the majority of envelope proteins bud to form subviral lipoprotein particles of 22 nm of diameter that do not contain a nucleocapsid. The protein is Large envelope protein of Hepatitis B virus genotype B2 subtype adw (isolate China/patient4/1996) (HBV-B).